Reading from the N-terminus, the 182-residue chain is A-type ATP synthase subunit E (182 aa).

Belongs to the V-ATPase E subunit family. In terms of assembly, has multiple subunits with at least A(3), B(3), C, D, E, F, H, I and proteolipid K(x).

Its subcellular location is the cell membrane. Its function is as follows. Component of the A-type ATP synthase that produces ATP from ADP in the presence of a proton gradient across the membrane. The chain is A-type ATP synthase subunit E from Picrophilus torridus (strain ATCC 700027 / DSM 9790 / JCM 10055 / NBRC 100828 / KAW 2/3).